Consider the following 317-residue polypeptide: Sulfate adenylyltransferase subunit 2 (317 aa).

Disordered regions lie at residues methionine 1 to proline 22 and arginine 298 to phenylalanine 317.

This sequence belongs to the PAPS reductase family. CysD subfamily. As to quaternary structure, heterodimer composed of CysD, the smaller subunit, and CysN.

It catalyses the reaction sulfate + ATP + H(+) = adenosine 5'-phosphosulfate + diphosphate. Its pathway is sulfur metabolism; hydrogen sulfide biosynthesis; sulfite from sulfate: step 1/3. In terms of biological role, with CysN forms the ATP sulfurylase (ATPS) that catalyzes the adenylation of sulfate producing adenosine 5'-phosphosulfate (APS) and diphosphate, the first enzymatic step in sulfur assimilation pathway. APS synthesis involves the formation of a high-energy phosphoric-sulfuric acid anhydride bond driven by GTP hydrolysis by CysN coupled to ATP hydrolysis by CysD. This chain is Sulfate adenylyltransferase subunit 2 (cysD), found in Rhizobium tropici.